Here is a 157-residue protein sequence, read N- to C-terminus: Altered inheritance of mitochondria protein 19, mitochondrial (157 aa).

Ser2 is modified (N-acetylserine). The next 4 helical transmembrane spans lie at 31–48 (ALANAALLASTPVLSPSF), 80–96 (TALFFSTMQAIGAYMIY), 103–119 (GAGFIATWSALYLIVGG), and 131–147 (TWPLVLSSVSLANAVLY).

It belongs to the AIM19 family.

The protein localises to the mitochondrion membrane. This is Altered inheritance of mitochondria protein 19, mitochondrial (AIM19) from Saccharomyces cerevisiae (strain ATCC 204508 / S288c) (Baker's yeast).